Consider the following 596-residue polypeptide: NADH-quinone oxidoreductase subunit C/D (596 aa).

The interval 1-186 is NADH dehydrogenase I subunit C; it reads MMNDNKYIHI…PAFTLTRKKE (186 aa). The interval 210–596 is NADH dehydrogenase I subunit D; that stretch reads DFMFLNLGPN…IDFVMSDVDR (387 aa).

In the N-terminal section; belongs to the complex I 30 kDa subunit family. The protein in the C-terminal section; belongs to the complex I 49 kDa subunit family. As to quaternary structure, NDH-1 is composed of 13 different subunits. Subunits NuoB, CD, E, F, and G constitute the peripheral sector of the complex.

It localises to the cell inner membrane. The catalysed reaction is a quinone + NADH + 5 H(+)(in) = a quinol + NAD(+) + 4 H(+)(out). NDH-1 shuttles electrons from NADH, via FMN and iron-sulfur (Fe-S) centers, to quinones in the respiratory chain. The immediate electron acceptor for the enzyme in this species is believed to be ubiquinone. Couples the redox reaction to proton translocation (for every two electrons transferred, four hydrogen ions are translocated across the cytoplasmic membrane), and thus conserves the redox energy in a proton gradient. The sequence is that of NADH-quinone oxidoreductase subunit C/D from Blochmanniella floridana.